Consider the following 214-residue polypeptide: uncharacterized protein (214 aa).

Residues 10-30 traverse the membrane as a helical segment; sequence LLLAGIGGFMVGGLASWVVSS. Residues 147–157 show a composition bias toward polar residues; it reads SSQANSQSTQP. The tract at residues 147-166 is disordered; the sequence is SSQANSQSTQPRDPIPTENF.

It is found in the membrane. This is an uncharacterized protein from Schizosaccharomyces pombe (strain 972 / ATCC 24843) (Fission yeast).